The primary structure comprises 355 residues: Probable dual-specificity RNA methyltransferase RlmN (355 aa).

Glutamate 92 serves as the catalytic Proton acceptor. The 233-residue stretch at 98 to 330 folds into the Radical SAM core domain; the sequence is FHYGLSVCVT…TELGINCGVR (233 aa). Cysteine 105 and cysteine 341 are oxidised to a cystine. 3 residues coordinate [4Fe-4S] cluster: cysteine 112, cysteine 116, and cysteine 119. Residues 164 to 165, serine 196, 219 to 221, and asparagine 297 contribute to the S-adenosyl-L-methionine site; these read GE and SLH. Catalysis depends on cysteine 341, which acts as the S-methylcysteine intermediate.

This sequence belongs to the radical SAM superfamily. RlmN family. [4Fe-4S] cluster serves as cofactor.

It localises to the cytoplasm. The enzyme catalyses adenosine(2503) in 23S rRNA + 2 reduced [2Fe-2S]-[ferredoxin] + 2 S-adenosyl-L-methionine = 2-methyladenosine(2503) in 23S rRNA + 5'-deoxyadenosine + L-methionine + 2 oxidized [2Fe-2S]-[ferredoxin] + S-adenosyl-L-homocysteine. It catalyses the reaction adenosine(37) in tRNA + 2 reduced [2Fe-2S]-[ferredoxin] + 2 S-adenosyl-L-methionine = 2-methyladenosine(37) in tRNA + 5'-deoxyadenosine + L-methionine + 2 oxidized [2Fe-2S]-[ferredoxin] + S-adenosyl-L-homocysteine. In terms of biological role, specifically methylates position 2 of adenine 2503 in 23S rRNA and position 2 of adenine 37 in tRNAs. The sequence is that of Probable dual-specificity RNA methyltransferase RlmN from Oceanobacillus iheyensis (strain DSM 14371 / CIP 107618 / JCM 11309 / KCTC 3954 / HTE831).